Consider the following 55-residue polypeptide: Large ribosomal subunit protein bL33B (55 aa).

It belongs to the bacterial ribosomal protein bL33 family.

The protein is Large ribosomal subunit protein bL33B of Rhodococcus jostii (strain RHA1).